A 119-amino-acid chain; its full sequence is Iron-sulfur cluster insertion protein ErpA (119 aa).

Iron-sulfur cluster is bound by residues Cys47, Cys111, and Cys113.

This sequence belongs to the HesB/IscA family. As to quaternary structure, homodimer. Iron-sulfur cluster serves as cofactor.

Functionally, required for insertion of 4Fe-4S clusters for at least IspG. The polypeptide is Iron-sulfur cluster insertion protein ErpA (Blochmanniella floridana).